The chain runs to 984 residues: Calsyntenin-1 (984 aa).

The signal sequence occupies residues 1–18 (MRTAYFIFVGALLGVSYA). Topologically, residues 19 to 850 (KHHHAARAPI…VGQGAIAGGA (832 aa)) are extracellular. 2 Cadherin domains span residues 66–142 (YLLT…APEI) and 143–257 (ENPW…APGV). Asparagine 206 and asparagine 305 each carry an N-linked (GlcNAc...) asparagine glycan. The chain crosses the membrane as a helical span at residues 851 to 871 (VAVVVVVCVGFLLVLLVIGVL). Residues 872–984 (KMRDTPMPRR…ISTNARSYRV (113 aa)) are Cytoplasmic-facing. The segment at 878–959 (MPRRRRQKRQ…QTEVLPHLDA (82 aa)) is disordered. Positions 886 to 896 (RQSDGGMHWDD) are enriched in basic and acidic residues. Residues 918-951 (EFSDEEEEEETDGESECSYRDEEDDVSEDEEDQT) show a composition bias toward acidic residues.

Belongs to the calsyntenin family. As to quaternary structure, interacts with isoform c of daf-2 (daf-2c); promoting daf-2c localization to synaptic regions. Interacts with klc-2. Interacts with unc-104. A proportion of the protein is proteolytically cleaved before the transmembrane domain in neurons, leading to release in the extracellular space. In terms of tissue distribution, widely expressed in the nervous system. Highly expressed in many head neurons, including most amphid sensory neurons. Also expressed in other tissues, such as intestine and gonadal sheath cells.

It localises to the golgi apparatus membrane. The protein localises to the perikaryon. It is found in the cell projection. The protein resides in the axon. Its subcellular location is the secreted. It localises to the synaptic cleft. Cell adhesion molecule involved in associative learning and memory. Acts as a regulator of GABAergic synaptic transmission at neuromuscular junctions by regulating GABA synaptic vesicle precursor transport: possibly functions as a cargo adapter for unc-104-mediated transport of synaptic vesicle precursors. Promotes localization of isoform c of daf-2 (daf-2c) to synaptic regions by acting as a signaling adapter between klc-2 and daf-2c. In terms of biological role, acts as aregulator of glutamate signaling in the sensory neurons by inhibiting the activity of command interneurons, thereby negatively regulating motor circuit activity and locomotion. This Caenorhabditis elegans protein is Calsyntenin-1.